Reading from the N-terminus, the 453-residue chain is Allantoinase (453 aa).

Histidine 59, histidine 61, lysine 146, histidine 186, histidine 242, and aspartate 315 together coordinate Zn(2+). N6-carboxylysine is present on lysine 146.

This sequence belongs to the metallo-dependent hydrolases superfamily. Allantoinase family. Homotetramer. The cofactor is Zn(2+). Post-translationally, carboxylation allows a single lysine to coordinate two zinc ions.

It catalyses the reaction (S)-allantoin + H2O = allantoate + H(+). The protein operates within nitrogen metabolism; (S)-allantoin degradation; allantoate from (S)-allantoin: step 1/1. Its function is as follows. Catalyzes the conversion of allantoin (5-ureidohydantoin) to allantoic acid by hydrolytic cleavage of the five-member hydantoin ring. This is Allantoinase from Salmonella agona (strain SL483).